We begin with the raw amino-acid sequence, 450 residues long: Divalent metal cation transporter MntH (450 aa).

The next 11 helical transmembrane spans lie at 34–54, 59–81, 108–128, 141–161, 170–190, 212–232, 263–283, 305–325, 361–381, 383–403, and 422–442; these read LSFL…GNWI, GGAQ…AMLL, IAII…IAEV, IPLI…LFIM, AIVG…VYIS, GILY…NLYL, IQLS…ASLF, PVLG…ALLA, SLAV…AAKI, QLLV…LIPL, and VNII…YLIV.

The protein belongs to the NRAMP family.

It localises to the cell membrane. Its function is as follows. H(+)-stimulated, divalent metal cation uptake system. The chain is Divalent metal cation transporter MntH from Staphylococcus aureus (strain MRSA252).